A 146-amino-acid chain; its full sequence is Snaclec jerdonibitin subunit beta (146 aa).

A signal peptide spans 1-23 (MGRFIFVSFGLLVVFLSLSGTGA). 3 cysteine pairs are disulfide-bonded: cysteine 25/cysteine 36, cysteine 53/cysteine 142, and cysteine 119/cysteine 134. The region spanning 32–143 (YEGHCYRVFQ…CSKTYPFVCK (112 aa)) is the C-type lectin domain.

Belongs to the snaclec family. As to quaternary structure, heterodimer of subunits alpha and beta; disulfide-linked. In terms of tissue distribution, expressed by the venom gland.

The protein resides in the secreted. Functionally, snaclec that dose-dependently inhibits platelet aggregation induced by ristocetin or low-dose thrombin, but not by high-dose thrombin. Binds to GPIbalpha (GP1BA). In vivo, also dose-dependently induces thrombocytopenia of mice and platelet counts remains at very low level even after 18 hours intravenous injection. The chain is Snaclec jerdonibitin subunit beta from Protobothrops jerdonii (Jerdon's pitviper).